The following is a 359-amino-acid chain: Phosphate acyltransferase (359 aa).

Belongs to the PlsX family. As to quaternary structure, homodimer. Probably interacts with PlsY.

It localises to the cytoplasm. The enzyme catalyses a fatty acyl-[ACP] + phosphate = an acyl phosphate + holo-[ACP]. It participates in lipid metabolism; phospholipid metabolism. In terms of biological role, catalyzes the reversible formation of acyl-phosphate (acyl-PO(4)) from acyl-[acyl-carrier-protein] (acyl-ACP). This enzyme utilizes acyl-ACP as fatty acyl donor, but not acyl-CoA. This is Phosphate acyltransferase from Citrobacter koseri (strain ATCC BAA-895 / CDC 4225-83 / SGSC4696).